Reading from the N-terminus, the 319-residue chain is Carbonic anhydrase 6 (319 aa).

Residues 1–14 (MITLLFLLVVGAQA) form the signal peptide. Positions 16-273 (HEWTYSEGVL…LNHRVVEANF (258 aa)) constitute an Alpha-carbonic anhydrase domain. A disulfide bridge connects residues Cys-37 and Cys-219. Residue Asn-62 is glycosylated (N-linked (GlcNAc...) asparagine). His-80 serves as the catalytic Proton donor/acceptor. Residues His-106, His-108, and His-133 each coordinate Zn(2+). Residue 215–216 (TT) participates in substrate binding. Asn-251 carries N-linked (GlcNAc...) asparagine glycosylation.

It belongs to the alpha-carbonic anhydrase family. Zn(2+) serves as cofactor. As to expression, major constituent of saliva.

It localises to the secreted. The catalysed reaction is hydrogencarbonate + H(+) = CO2 + H2O. In terms of biological role, reversible hydration of carbon dioxide. Its role in saliva is unknown. The polypeptide is Carbonic anhydrase 6 (CA6) (Bos taurus (Bovine)).